We begin with the raw amino-acid sequence, 349 residues long: Transmembrane protein 255A (349 aa).

The next 4 membrane-spanning stretches (helical) occupy residues 30–50 (IYVTVTLLIVSVLILTVGLAA), 57–77 (VTVGGYYPGVILGFGSFLGII), 89–109 (LVASIVFISFGVIAAFCCAIV), and 226–246 (TILNIVGLFLGIITAAVLGGF). Residues 301–329 (VFPSSPPSGLSDEPQSASPSPSYMWSSSA) form a disordered region. The segment covering 316-329 (SASPSPSYMWSSSA) has biased composition (low complexity).

It belongs to the TMEM255 family.

The protein resides in the membrane. This chain is Transmembrane protein 255A (TMEM255A), found in Macaca fascicularis (Crab-eating macaque).